A 654-amino-acid chain; its full sequence is Protein fem-1 homolog A-like (654 aa).

ANK repeat units lie at residues 2–31, 40–70, 82–111, 115–145, 149–178, 182–211, and 214–243; these read DLHT…REEL, GGGT…SVEA, EGAP…SVNR, TNST…DLEV, HGHT…QVNR, KGNT…RMER, and YGMT…SHEQ. The residue at position 108 (Ser-108) is a Phosphoserine. Residues 241–265 form a disordered region; the sequence is HEQLSGTELPGEGSSQMAGNHCSTP. Residues 253 to 263 show a composition bias toward polar residues; the sequence is GSSQMAGNHCS. TPR repeat units lie at residues 283 to 317 and 375 to 408; these read VEAL…RHQG and SYYI…QQNN. ANK repeat units follow at residues 519–561 and 565–594; these read NGFT…DPDS and DNNS…HMDA. Ser-608 carries the phosphoserine modification.

It belongs to the fem-1 family. In terms of assembly, component of a CRL2 E3 ubiquitin-protein ligase complex, also named ECS (Elongin BC-CUL2/5-SOCS-box protein) complex, composed of CUL2, Elongin BC (ELOB and ELOC), RBX1 and substrate-specific adapter FEM1A.

The protein localises to the mitochondrion. The protein resides in the cytoplasm. Its pathway is protein modification; protein ubiquitination. Substrate-recognition component of a Cul2-RING (CRL2) E3 ubiquitin-protein ligase complex of the DesCEND (destruction via C-end degrons) pathway, which recognizes a C-degron located at the extreme C terminus of target proteins, leading to their ubiquitination and degradation. The C-degron recognized by the DesCEND pathway is usually a motif of less than ten residues and can be present in full-length proteins, truncated proteins or proteolytically cleaved forms. The CRL2(FEM1A) complex specifically recognizes proteins with an arginine at the C-terminus: recognizes and binds proteins ending with -Lys/Arg-Xaa-Arg and -Lys/Arg-Xaa-Xaa-Arg C-degrons, such as SIL1 or OR51B2, leading to their ubiquitination and degradation. This is Protein fem-1 homolog A-like from Mus musculus (Mouse).